The following is a 1004-amino-acid chain: Ephrin type-B receptor 2 (1004 aa).

Positions 1–19 (MGPLWFCCLPLALLPLLAA) are cleaved as a signal peptide. The Extracellular portion of the chain corresponds to 20-544 (VEETLMDSTT…QTSVQEKLPL (525 aa)). An Eph LBD domain is found at 21-203 (EETLMDSTTA…FYRKCPRVIQ (183 aa)). 2 disulfides stabilise this stretch: Cys63/Cys185 and Cys98/Cys108. Residues Asn266, Asn337, Asn429, Asn478, and Asn483 are each glycosylated (N-linked (GlcNAc...) asparagine). 2 Fibronectin type-III domains span residues 325 to 435 (IPSA…TNQA) and 436 to 531 (APSA…TMTE). The chain crosses the membrane as a helical span at residues 545-565 (IIGSSAAGLVFLIAVVVIIIV). At 566–1004 (CNRRRGFERA…QMNQIQSVEV (439 aa)) the chain is on the cytoplasmic side. Residues 639–902 (VKIEQVIGAG…QIVNTLDKMI (264 aa)) form the Protein kinase domain. Residues 645-653 (IGAGEFGEV) and Lys671 each bind ATP. The active-site Proton acceptor is Asp764. In terms of domain architecture, SAM spans 931 to 995 (TSFNTVDEWL…LNSIQVMRAQ (65 aa)). Residues 1002 to 1004 (VEV) carry the PDZ-binding motif.

Belongs to the protein kinase superfamily. Tyr protein kinase family. Ephrin receptor subfamily. In terms of assembly, heterotetramer upon binding of the ligand. The heterotetramer is composed of an ephrin dimer and a receptor dimer. Oligomerization is probably required to induce biological responses. In terms of processing, ligand binding induces cleavage by matrix metalloproteinases (MMPs) such as MMP7/MMP9, producing an EphB2/N-terminal fragment (NTF) and a C-terminal long fragment (EphB2-LF). EphB2-LF is further cleaved by MMPs, producing EphB2/CTF1 which is further cleaved by the PS1/gamma-secretase producing EphB2/CTF2. As to expression, wide tissue distribution throughout development and sustained expression in adult brain. The longer form (CEK5+) is specifically expressed in the central nervous system.

The protein resides in the cell membrane. It is found in the cell projection. Its subcellular location is the axon. It localises to the dendrite. The enzyme catalyses L-tyrosyl-[protein] + ATP = O-phospho-L-tyrosyl-[protein] + ADP + H(+). Functionally, receptor tyrosine kinase which binds promiscuously transmembrane ephrin-B family ligands residing on adjacent cells, leading to contact-dependent bidirectional signaling into neighboring cells. The signaling pathway downstream of the receptor is referred to as forward signaling while the signaling pathway downstream of the ephrin ligand is referred to as reverse signaling. Functions in axon guidance during development. In addition to axon guidance, also regulates dendritic spines development and maturation and stimulates the formation of excitatory synapses. In Gallus gallus (Chicken), this protein is Ephrin type-B receptor 2 (EPHB2).